The sequence spans 334 residues: MIVIPRYTIIKEKASSRIPEILDNLNLKNPLVITGKNTKKYNKDFDFIYYDEIETSDLENIKNYANDYDSIMGIGGGRPIDIGKLIAHKSKKPFLSVPTTASNDGIASPIVSLTQPSYMTEAPIAIIADIGIIKKSPKKLLSAGMGDIVSNITAVLDWELGKIEKSEKYSDSSGIFSKTIAIELMDYVLNSNLEEYPKKLVKALIGSGISIAIAHSSRPASGSEHLFSHALDIMKEKYDIDTDSLHGEQCGVGTLAIAQIYFEEKKLDIETFEMIKKSLKAVDAPITAKQLGFDDEIVIEALSSAHALRNRHTILRNGISKTEARKILEKSEII.

Residues 77 to 81 (GRPID) and 99 to 102 (TTAS) each bind NAD(+). Position 104 (Asp-104) interacts with substrate. NAD(+) is bound at residue Ser-108. Asp-147 lines the substrate pocket. Zn(2+) contacts are provided by Asp-147 and His-225. Substrate is bound at residue His-229. His-246 is a Zn(2+) binding site.

The protein belongs to the glycerol-1-phosphate dehydrogenase family. It depends on Zn(2+) as a cofactor.

The protein resides in the cytoplasm. It carries out the reaction sn-glycerol 1-phosphate + NAD(+) = dihydroxyacetone phosphate + NADH + H(+). It catalyses the reaction sn-glycerol 1-phosphate + NADP(+) = dihydroxyacetone phosphate + NADPH + H(+). The protein operates within membrane lipid metabolism; glycerophospholipid metabolism. Functionally, catalyzes the NAD(P)H-dependent reduction of dihydroxyacetonephosphate (DHAP or glycerone phosphate) to glycerol 1-phosphate (G1P). The G1P thus generated is used as the glycerophosphate backbone of phospholipids in the cellular membranes of Archaea. The polypeptide is Glycerol-1-phosphate dehydrogenase [NAD(P)+] (Methanococcus maripaludis (strain C5 / ATCC BAA-1333)).